The sequence spans 207 residues: Probable GTP-binding protein EngB (207 aa).

The EngB-type G domain occupies 24 to 199 (GGYEVAFAGR…RAIVGAWLGL (176 aa)). Residues 32 to 39 (GRSNAGKS), 59 to 63 (GRTQQ), 77 to 80 (DLPG), 144 to 147 (TKAD), and 178 to 180 (YSG) each bind GTP. Mg(2+) is bound by residues serine 39 and threonine 61.

This sequence belongs to the TRAFAC class TrmE-Era-EngA-EngB-Septin-like GTPase superfamily. EngB GTPase family. Requires Mg(2+) as cofactor.

Functionally, necessary for normal cell division and for the maintenance of normal septation. This Xanthomonas euvesicatoria pv. vesicatoria (strain 85-10) (Xanthomonas campestris pv. vesicatoria) protein is Probable GTP-binding protein EngB.